We begin with the raw amino-acid sequence, 261 residues long: Complex I assembly factor TIMMDC1, mitochondrial (261 aa).

3 helical membrane-spanning segments follow: residues 67–87 (LNSV…YGGV), 131–151 (WGWR…CMSV), and 183–203 (AGGI…LLLM).

It belongs to the Tim17/Tim22/Tim23 family. As to quaternary structure, associates with complex I assembly intermediates during its biogenesis in a NdufAF3 and NdufAF4 dependent manner.

Its subcellular location is the membrane. Chaperone protein involved in the assembly of the mitochondrial NADH:ubiquinone oxidoreductase complex (complex I). Essential for viability. In Drosophila melanogaster (Fruit fly), this protein is Complex I assembly factor TIMMDC1, mitochondrial.